The chain runs to 359 residues: Type II restriction enzyme HgiDI (359 aa).

It catalyses the reaction Endonucleolytic cleavage of DNA to give specific double-stranded fragments with terminal 5'-phosphates.. In terms of biological role, a P subtype restriction enzyme that recognizes the double-stranded sequence 5'-GRCGYC-3' and cleaves after R-2. The polypeptide is Type II restriction enzyme HgiDI (Herpetosiphon aurantiacus (Herpetosiphon giganteus)).